Here is a 346-residue protein sequence, read N- to C-terminus: D-alanine--D-alanine ligase (346 aa).

The ATP-grasp domain occupies 133–327 (KLYAKSVGVK…ALADQISLEK (195 aa)). 159-211 (LSFPCIIKPARLGSSIGISIVKDEKDLEYAKDVGFEFDNDLVVEEFKNNIKEY) provides a ligand contact to ATP. 3 residues coordinate Mg(2+): Asp-284, Glu-296, and Asn-298.

It belongs to the D-alanine--D-alanine ligase family. Requires Mg(2+) as cofactor. Mn(2+) is required as a cofactor.

Its subcellular location is the cytoplasm. It carries out the reaction 2 D-alanine + ATP = D-alanyl-D-alanine + ADP + phosphate + H(+). The protein operates within cell wall biogenesis; peptidoglycan biosynthesis. In terms of biological role, cell wall formation. This chain is D-alanine--D-alanine ligase, found in Campylobacter jejuni subsp. jejuni serotype O:6 (strain 81116 / NCTC 11828).